A 173-amino-acid polypeptide reads, in one-letter code: Ribulose bisphosphate carboxylase small subunit, chloroplastic 2 (173 aa).

The N-terminal 33 residues, 1–33, are a transit peptide targeting the chloroplast; the sequence is VVLSKECAKPLATPKVTLNKRGFATTIATKNRE.

The protein belongs to the RuBisCO small chain family. In terms of assembly, heterohexadecamer of 8 large and 8 small subunits.

It is found in the plastid. It localises to the chloroplast. Functionally, ruBisCO catalyzes two reactions: the carboxylation of D-ribulose 1,5-bisphosphate, the primary event in carbon dioxide fixation, as well as the oxidative fragmentation of the pentose substrate. Both reactions occur simultaneously and in competition at the same active site. Although the small subunit is not catalytic it is essential for maximal activity. This chain is Ribulose bisphosphate carboxylase small subunit, chloroplastic 2, found in Acetabularia acetabulum (Mermaid's wine glass).